The chain runs to 132 residues: Small ribosomal subunit protein bS6 (132 aa).

The segment at 96-132 is disordered; the sequence is HAEGPSIQMQKRDERERGDRGDRPDRGDRGERGGFRR. The span at 105-132 shows a compositional bias: basic and acidic residues; it reads QKRDERERGDRGDRPDRGDRGERGGFRR.

This sequence belongs to the bacterial ribosomal protein bS6 family.

Its function is as follows. Binds together with bS18 to 16S ribosomal RNA. This chain is Small ribosomal subunit protein bS6, found in Cereibacter sphaeroides (strain ATCC 17025 / ATH 2.4.3) (Rhodobacter sphaeroides).